The chain runs to 371 residues: MPHHYILTLFGLLPVATNISTWWNFGSMLLTCLALQTLTGFFLAVHYTANINLAFSSIIHIIRDVPHGWMMQNLHAIGASMFFICIYIHIARGLYYGSYLNKETWMSGITLLIILMATAFFGYVLPWGQMSFWAATVITNLLTAVPYLGTTLTTWLWGGFAINDPTLTRFFALHFILPFAIISLSSLHVILLHEEGSSNPLGTNPDIDKIPFHPYHSYKDLLLLTLMILSLLIIVSFFPDIFNDPDNFSKANPLVTPQHIKPEWYFLFAYGILRSIPNKLGGALALVMSIMILLTIPFTHTSTMRSMTFRPLSQLMFWTLVSTFITITWAATKPVEPPFIIISQVTATLYFTFFISTPILGWLENKMTNHP.

A run of 4 helical transmembrane segments spans residues 25–45 (FGSMLLTCLALQTLTGFFLAV), 69–90 (WMMQNLHAIGASMFFICIYIHI), 105–125 (WMSGITLLIILMATAFFGYVL), and 170–190 (FFALHFILPFAIISLSSLHVI). Heme b-binding residues include His-75 and His-89. 2 residues coordinate heme b: His-174 and His-188. His-193 is an a ubiquinone binding site. 4 consecutive transmembrane segments (helical) span residues 218 to 238 (YKDLLLLTLMILSLLIIVSFF), 280 to 300 (LGGALALVMSIMILLTIPFTH), 312 to 332 (LSQLMFWTLVSTFITITWAAT), and 339 to 358 (FIIISQVTATLYFTFFISTP).

Belongs to the cytochrome b family. The cytochrome bc1 complex contains 3 respiratory subunits (MT-CYB, CYC1 and UQCRFS1), 2 core proteins (UQCRC1 and UQCRC2) and probably 6 low-molecular weight proteins. Requires heme b as cofactor.

The protein resides in the mitochondrion inner membrane. Functionally, component of the ubiquinol-cytochrome c reductase complex (complex III or cytochrome b-c1 complex) that is part of the mitochondrial respiratory chain. The b-c1 complex mediates electron transfer from ubiquinol to cytochrome c. Contributes to the generation of a proton gradient across the mitochondrial membrane that is then used for ATP synthesis. The protein is Cytochrome b (MT-CYB) of Python sebae (African rock python).